Consider the following 209-residue polypeptide: Small ribosomal subunit protein uS3 (209 aa).

Residues 38-107 enclose the KH type-2 domain; the sequence is IRNFIKKNYN…KFGIDIIELK (70 aa).

Belongs to the universal ribosomal protein uS3 family. Part of the 30S ribosomal subunit. Forms a tight complex with proteins S10 and S14.

Its function is as follows. Binds the lower part of the 30S subunit head. Binds mRNA in the 70S ribosome, positioning it for translation. In Fervidobacterium nodosum (strain ATCC 35602 / DSM 5306 / Rt17-B1), this protein is Small ribosomal subunit protein uS3.